A 159-amino-acid chain; its full sequence is Phospholipase A2 AP-PLA2-I (159 aa).

An N-terminal signal peptide occupies residues 1–19 (MNFLVVIVTTVSLAGAASA). A propeptide spanning residues 20–23 (GEIQ) is cleaved from the precursor. 6 cysteine pairs are disulfide-bonded: C51–C159, C53–C69, C68–C139, C75–C132, C85–C125, and C110–C130. Ca(2+)-binding residues include Y52, G54, and G56. Residue H72 is part of the active site. D73 serves as a coordination point for Ca(2+). Residue D133 is part of the active site.

The protein belongs to the phospholipase A2 family. Group I subfamily. In terms of assembly, homodimer. The cofactor is Ca(2+). In terms of tissue distribution, expressed by the venom gland.

Its subcellular location is the secreted. The catalysed reaction is a 1,2-diacyl-sn-glycero-3-phosphocholine + H2O = a 1-acyl-sn-glycero-3-phosphocholine + a fatty acid + H(+). Its function is as follows. Starfish phospholipase A2 (PLA2) that has hemorrhagic and capillary permeability-increasing activities and hence is considered to be deeply involved in the local inflammation. Shows hemolytic activity only in the presence of phosphatidylcholine (PC). PLA2 catalyzes the calcium-dependent hydrolysis of the 2-acyl groups in 3-sn-phosphoglycerides. The sequence is that of Phospholipase A2 AP-PLA2-I from Acanthaster planci (Crown-of-thorns starfish).